A 110-amino-acid chain; its full sequence is UPF0060 membrane protein ASA_2267 (110 aa).

4 consecutive transmembrane segments (helical) span residues 7–27, 33–53, 63–83, and 87–107; these read IGLF…PYLW, SVWL…LLSL, AAYG…VDGI, and LWDL…MFAP.

This sequence belongs to the UPF0060 family.

The protein localises to the cell inner membrane. This Aeromonas salmonicida (strain A449) protein is UPF0060 membrane protein ASA_2267.